We begin with the raw amino-acid sequence, 438 residues long: UDP-N-acetylmuramoylalanine--D-glutamate ligase (438 aa).

Residue 112–118 (GSNGKST) participates in ATP binding.

It belongs to the MurCDEF family.

It is found in the cytoplasm. The catalysed reaction is UDP-N-acetyl-alpha-D-muramoyl-L-alanine + D-glutamate + ATP = UDP-N-acetyl-alpha-D-muramoyl-L-alanyl-D-glutamate + ADP + phosphate + H(+). It participates in cell wall biogenesis; peptidoglycan biosynthesis. Functionally, cell wall formation. Catalyzes the addition of glutamate to the nucleotide precursor UDP-N-acetylmuramoyl-L-alanine (UMA). This chain is UDP-N-acetylmuramoylalanine--D-glutamate ligase, found in Shigella dysenteriae serotype 1 (strain Sd197).